A 288-amino-acid chain; its full sequence is MRIRVPATTANLGPGFDSCGLALTLYLTLDIGEKADSWYIEHNIGGGIPHDETNVIIETALNLAPNLTPHHLVMTCDIPPARGLGSSSAAVVAGIELANTLAELNLSKEEKVRIAAEIEGHPDNVAPAVLGNWVVGAKLDGEDFYVRHLFPDCALIAFIPKAELLTSESRGVLPETLPFKEAVKASSIANVMIAAILRNDMTLAGEMMERDLWHEKYRSKLVPHLTQIREVAKNNGAYAACLSGAGPTVLVFAPRDVADTLQTSLQTLEIDADVLLLDVEGSGAEVFR.

Position 79-89 (79-89) interacts with ATP; the sequence is PPARGLGSSSA.

It belongs to the GHMP kinase family. Homoserine kinase subfamily.

Its subcellular location is the cytoplasm. It carries out the reaction L-homoserine + ATP = O-phospho-L-homoserine + ADP + H(+). It functions in the pathway amino-acid biosynthesis; L-threonine biosynthesis; L-threonine from L-aspartate: step 4/5. In terms of biological role, catalyzes the ATP-dependent phosphorylation of L-homoserine to L-homoserine phosphate. The protein is Homoserine kinase of Listeria innocua serovar 6a (strain ATCC BAA-680 / CLIP 11262).